Reading from the N-terminus, the 731-residue chain is NADH-ubiquinone oxidoreductase 75 kDa subunit, mitochondrial (731 aa).

The N-terminal 27 residues, 1 to 27 (MIRAPLVKALGALGSPTHQMASRAVRT), are a transit peptide targeting the mitochondrion. The 2Fe-2S ferredoxin-type domain occupies 40–118 (EKIEVFVDDI…GWRIKTNSDL (79 aa)). [2Fe-2S] cluster contacts are provided by C74, C85, C88, and C102. One can recognise a 4Fe-4S His(Cys)3-ligated-type domain in the interval 118-157 (LTRKAREGVMEFLLMNHPLDCPICDQGGECDLQDQAMAFG). [4Fe-4S] cluster-binding residues include H134, C138, C141, C147, C190, C193, C196, and C240. Positions 259–315 (IRKVSSIDVLDAVGSNIVVSTRTNEVLRILPRENEDVNEEWLADKSRFACDGLKRQR) constitute a 4Fe-4S Mo/W bis-MGD-type domain.

This sequence belongs to the complex I 75 kDa subunit family. In terms of assembly, complex I is composed of about 45 different subunits. Requires [2Fe-2S] cluster as cofactor. [4Fe-4S] cluster is required as a cofactor.

The protein resides in the mitochondrion inner membrane. The catalysed reaction is a ubiquinone + NADH + 5 H(+)(in) = a ubiquinol + NAD(+) + 4 H(+)(out). In terms of biological role, core subunit of the mitochondrial membrane respiratory chain NADH dehydrogenase (Complex I) that is believed to belong to the minimal assembly required for catalysis. Complex I functions in the transfer of electrons from NADH to the respiratory chain. The immediate electron acceptor for the enzyme is believed to be ubiquinone. This is the largest subunit of complex I and it is a component of the iron-sulfur (IP) fragment of the enzyme. It may form part of the active site crevice where NADH is oxidized. The sequence is that of NADH-ubiquinone oxidoreductase 75 kDa subunit, mitochondrial from Drosophila melanogaster (Fruit fly).